The following is a 416-amino-acid chain: Adenylosuccinate synthetase (416 aa).

GTP-binding positions include 13–19 (GDEGKGK) and 41–43 (GHT). Aspartate 14 serves as the catalytic Proton acceptor. The Mg(2+) site is built by aspartate 14 and glycine 41. IMP contacts are provided by residues 14 to 17 (DEGK), 39 to 42 (NAGH), threonine 126, arginine 140, glutamine 220, threonine 235, and arginine 299. Histidine 42 acts as the Proton donor in catalysis. 295–301 (VSTGRKR) is a substrate binding site. GTP contacts are provided by residues arginine 301, 327–329 (KLD), and 405–407 (STS).

It belongs to the adenylosuccinate synthetase family. In terms of assembly, homodimer. It depends on Mg(2+) as a cofactor.

The protein localises to the cytoplasm. The catalysed reaction is IMP + L-aspartate + GTP = N(6)-(1,2-dicarboxyethyl)-AMP + GDP + phosphate + 2 H(+). It functions in the pathway purine metabolism; AMP biosynthesis via de novo pathway; AMP from IMP: step 1/2. Its function is as follows. Plays an important role in the de novo pathway of purine nucleotide biosynthesis. Catalyzes the first committed step in the biosynthesis of AMP from IMP. In Campylobacter jejuni subsp. jejuni serotype O:6 (strain 81116 / NCTC 11828), this protein is Adenylosuccinate synthetase.